The following is a 504-amino-acid chain: Porphyrin biosynthesis protein HemD (504 aa).

The tract at residues M1 to K248 is uroporphyrinogen-III C-methyltransferase. Residues K249 to D504 are uroporphyrinogen-III synthase.

The protein in the N-terminal section; belongs to the precorrin methyltransferase family. It in the C-terminal section; belongs to the uroporphyrinogen-III synthase family.

The catalysed reaction is uroporphyrinogen III + 2 S-adenosyl-L-methionine = precorrin-2 + 2 S-adenosyl-L-homocysteine + H(+). It carries out the reaction hydroxymethylbilane = uroporphyrinogen III + H2O. The protein operates within cofactor biosynthesis; adenosylcobalamin biosynthesis; precorrin-2 from uroporphyrinogen III: step 1/1. It functions in the pathway porphyrin-containing compound metabolism; siroheme biosynthesis; precorrin-2 from uroporphyrinogen III: step 1/1. May catalyze sequential reactions to synthesize uroporphyrinogen III from hydroxymethylbilane (HMB) and then precorrin-2, which are intermediate compounds in both vitamin B12 and siroheme biosyntheses. This Ruminiclostridium josui (Clostridium josui) protein is Porphyrin biosynthesis protein HemD (hemD).